A 356-amino-acid polypeptide reads, in one-letter code: UDP-N-acetylglucosamine--N-acetylmuramyl-(pentapeptide) pyrophosphoryl-undecaprenol N-acetylglucosamine transferase (356 aa).

Residues 12 to 14 (TGG), Asn124, Arg163, Ser188, Ile242, and Gln287 contribute to the UDP-N-acetyl-alpha-D-glucosamine site.

It belongs to the glycosyltransferase 28 family. MurG subfamily.

The protein localises to the cell inner membrane. The catalysed reaction is di-trans,octa-cis-undecaprenyl diphospho-N-acetyl-alpha-D-muramoyl-L-alanyl-D-glutamyl-meso-2,6-diaminopimeloyl-D-alanyl-D-alanine + UDP-N-acetyl-alpha-D-glucosamine = di-trans,octa-cis-undecaprenyl diphospho-[N-acetyl-alpha-D-glucosaminyl-(1-&gt;4)]-N-acetyl-alpha-D-muramoyl-L-alanyl-D-glutamyl-meso-2,6-diaminopimeloyl-D-alanyl-D-alanine + UDP + H(+). It participates in cell wall biogenesis; peptidoglycan biosynthesis. In terms of biological role, cell wall formation. Catalyzes the transfer of a GlcNAc subunit on undecaprenyl-pyrophosphoryl-MurNAc-pentapeptide (lipid intermediate I) to form undecaprenyl-pyrophosphoryl-MurNAc-(pentapeptide)GlcNAc (lipid intermediate II). The protein is UDP-N-acetylglucosamine--N-acetylmuramyl-(pentapeptide) pyrophosphoryl-undecaprenol N-acetylglucosamine transferase of Pseudomonas syringae pv. tomato (strain ATCC BAA-871 / DC3000).